The primary structure comprises 339 residues: 4-hydroxy-2-oxovalerate aldolase 3 (339 aa).

The 253-residue stretch at 7-259 folds into the Pyruvate carboxyltransferase domain; it reads IRVTDTSLRD…KTGIDFFAIA (253 aa). 15-16 contributes to the substrate binding site; the sequence is RD. Aspartate 16 is a binding site for Mn(2+). The active-site Proton acceptor is the histidine 19. Substrate contacts are provided by serine 169 and histidine 198. Residues histidine 198 and histidine 200 each contribute to the Mn(2+) site. A substrate-binding site is contributed by tyrosine 289.

The protein belongs to the 4-hydroxy-2-oxovalerate aldolase family.

The enzyme catalyses (S)-4-hydroxy-2-oxopentanoate = acetaldehyde + pyruvate. In Rhodococcus opacus (strain B4), this protein is 4-hydroxy-2-oxovalerate aldolase 3.